A 358-amino-acid polypeptide reads, in one-letter code: WD repeat-containing protein 53 (358 aa).

WD repeat units follow at residues 1–38, 43–80, 85–123, 127–166, 173–225, and 232–270; these read MAVK…AWGE, LGHT…VLDV, DSLD…ILDL, KVIR…LWSL, WITN…RIFR, and EQEL…LWDA. A disordered region spans residues 273–311; sequence EVEKKQKSPTKRTHRKKPKRGTCTKQGGNTNASVTDEEE. Positions 279-294 are enriched in basic residues; that stretch reads KSPTKRTHRKKPKRGT. Positions 295-306 are enriched in polar residues; sequence CTKQGGNTNASV. A WD 7 repeat occupies 314–355; the sequence is NILPKLNIEHGEKVNWLLGTKIKGHQNILVADQTSCISVYPL.

The protein belongs to the WD repeat WDR53 family.

The protein is WD repeat-containing protein 53 (WDR53) of Homo sapiens (Human).